The primary structure comprises 74 residues: U3-agatoxin-Ao1g (74 aa).

A signal peptide spans 1–20; that stretch reads MRAIISLLLISTMVFGVIEA. Residues 21–34 constitute a propeptide that is removed on maturation; sequence VSVEEGLKIFEGER. 4 disulfides stabilise this stretch: Cys37/Cys53, Cys44/Cys58, Cys52/Cys68, and Cys60/Cys66. Asparagine amide is present on Asn72.

It belongs to the neurotoxin 07 (Beta/delta-agtx) family. 03 (aga-4) subfamily. Aga sub-subfamily. Expressed by the venom gland.

Its subcellular location is the secreted. Functionally, insecticidal neurotoxin that modulates the insect Nav channel (DmNaV1/tipE (para/tipE)) in a unique manner, with both the activation and inactivation processes being affected. The voltage dependence of activation is shifted toward more hyperpolarized potentials (analogous to site 4 toxins) and a non-inactivating persistent sodium current is induced (site 3-like action). Interestingly, both effects take place in a voltage-dependent manner, producing a bell-shaped curve between -80 and 0 mV. This chain is U3-agatoxin-Ao1g, found in Agelena orientalis (Funnel-web spider).